Here is a 231-residue protein sequence, read N- to C-terminus: NADH-ubiquinone oxidoreductase chain 4 (231 aa).

The next 6 membrane-spanning stretches (helical) occupy residues 1–21, 34–54, 63–85, 89–111, 128–148, and 156–176; these read PIAG…YGMI, MFMP…LTCL, IAYS…TPWG, AMAL…NTTY, ILPM…AIPP, and FLIM…LGLS.

This sequence belongs to the complex I subunit 4 family.

The protein localises to the mitochondrion membrane. The enzyme catalyses a ubiquinone + NADH + 5 H(+)(in) = a ubiquinol + NAD(+) + 4 H(+)(out). Core subunit of the mitochondrial membrane respiratory chain NADH dehydrogenase (Complex I) that is believed to belong to the minimal assembly required for catalysis. Complex I functions in the transfer of electrons from NADH to the respiratory chain. The immediate electron acceptor for the enzyme is believed to be ubiquinone. The protein is NADH-ubiquinone oxidoreductase chain 4 (MT-ND4) of Bothriechis schlegelii (Eyelash palm pitviper).